The chain runs to 312 residues: Ribosomal protein uL3 glutamine methyltransferase (312 aa).

Belongs to the protein N5-glutamine methyltransferase family. PrmB subfamily.

The enzyme catalyses L-glutaminyl-[ribosomal protein uL3] + S-adenosyl-L-methionine = N(5)-methyl-L-glutaminyl-[ribosomal protein uL3] + S-adenosyl-L-homocysteine + H(+). Methylates large ribosomal subunit protein uL3 on a specific glutamine residue. The chain is Ribosomal protein uL3 glutamine methyltransferase from Xylella fastidiosa (strain Temecula1 / ATCC 700964).